The chain runs to 297 residues: Phospholipid scramblase 2 (297 aa).

Positions 1–72 (MRSWNSLFCL…NQPGRPEGVP (72 aa)) are proline-rich domain (PRD). The Cytoplasmic portion of the chain corresponds to 1 to 276 (MRSWNSLFCL…IQFPRDLDVK (276 aa)). The residue at position 149 (Thr-149) is a Phosphothreonine; by PKC. Residues Cys-172, Cys-173, Cys-174, Cys-176, and Cys-177 are each lipidated (S-palmitoyl cysteine). The helical transmembrane segment at 277–293 (MKAVMIGACFLIDYMFF) threads the bilayer. Over 294–297 (ERTR) the chain is Extracellular.

Belongs to the phospholipid scramblase family. It depends on Ca(2+) as a cofactor. As to expression, expression of isoform 1 seems restricted to testis.

It is found in the membrane. Its subcellular location is the nucleus. It catalyses the reaction a 1,2-diacyl-sn-glycero-3-phosphocholine(in) = a 1,2-diacyl-sn-glycero-3-phosphocholine(out). May catalyze calcium-induced ATP-independent rapid bidirectional and non-specific movement of phospholipids (lipid scrambling or lipid flip-flop) between the inner and outer leaflet of the plasma membrane. In terms of biological role, has no phospholipid scramblase activity, due to the lack of a N-terminal proline-rich domain. The protein is Phospholipid scramblase 2 of Homo sapiens (Human).